The sequence spans 345 residues: Ananain (345 aa).

A signal peptide spans 1–24 (MTSKVQLVFLFLFLCVMWASPSAA). Positions 25 to 122 (SCDEPSDPMM…VSFDDVDISS (98 aa)) are cleaved as a propeptide — activation peptide. 3 disulfides stabilise this stretch: C144/C184, C178/C217, and C273/C325. The active site involves C147. C147 serves as a coordination point for E64. Catalysis depends on residues H279 and N300.

As to expression, stem (at protein level).

The enzyme catalyses Hydrolysis of proteins with broad specificity for peptide bonds. Best reported small molecule substrate Bz-Phe-Val-Arg-|-NHMec, but broader specificity than fruit bromelain.. With respect to regulation, strongly inhibited by chicken egg-white cystatin. Inhibited by iodoacetamide and the active-site-directed inhibitor E64 (L-trans-epoxysuccinyl-leucylamide-(4-guanido)-butane). Functionally, cysteine protease. Displays a high level of diversity in substrate specificity at the P1-P1' cleavage site. A hydrophilic P1 residue is preferred, with Gln or Arg strongly preferred. Favors an Ile/Leu residue at the P2 position of substrates, with an overall higher preference for Leu. The optimal tripeptide for cleavage is Pro-Leu-Gln, with cleavage occurring after the Gln residue. Another optimal tripeptide is Val-Leu-Arg, which may imply that a hydrophobic residue at the P3 position of substrates is preferred. This Ananas comosus (Pineapple) protein is Ananain.